We begin with the raw amino-acid sequence, 317 residues long: Transaldolase (317 aa).

Lysine 132 acts as the Schiff-base intermediate with substrate in catalysis.

The protein belongs to the transaldolase family. Type 1 subfamily. Homodimer.

Its subcellular location is the cytoplasm. It catalyses the reaction D-sedoheptulose 7-phosphate + D-glyceraldehyde 3-phosphate = D-erythrose 4-phosphate + beta-D-fructose 6-phosphate. Its pathway is carbohydrate degradation; pentose phosphate pathway; D-glyceraldehyde 3-phosphate and beta-D-fructose 6-phosphate from D-ribose 5-phosphate and D-xylulose 5-phosphate (non-oxidative stage): step 2/3. Its function is as follows. Transaldolase is important for the balance of metabolites in the pentose-phosphate pathway. In Edwardsiella ictaluri (strain 93-146), this protein is Transaldolase.